The following is a 359-amino-acid chain: WW domain-binding protein wbp-11 (359 aa).

Disordered regions lie at residues 1 to 38 (MPSI…DRQQ), 235 to 264 (PSSY…NPMG), and 317 to 341 (PGDN…QKQA). Basic and acidic residues predominate over residues 8-27 (KSGERYRAPTDQARKMDRKK). The segment covering 245-256 (MPHHHHHHHPHA) has biased composition (basic residues).

Activates pre-mRNA splicing. May inhibit PP1 phosphatase activity. The polypeptide is WW domain-binding protein wbp-11 (Caenorhabditis elegans).